We begin with the raw amino-acid sequence, 66 residues long: uncharacterized protein (66 aa).

Low complexity predominate over residues 1–18 (MSTTSSSSTFSTRTASLS). Residues 1-22 (MSTTSSSSTFSTRTASLSQSYT) form a disordered region.

This is an uncharacterized protein from Schizosaccharomyces pombe (strain 972 / ATCC 24843) (Fission yeast).